A 163-amino-acid chain; its full sequence is Phosphopantetheine adenylyltransferase (163 aa).

The ATP site is built by Ser-10 and His-18. A substrate-binding site is contributed by Ser-10. Substrate is bound by residues Lys-42, Thr-75, and Arg-89. ATP-binding positions include 90 to 92 (GIR), Glu-100, and 125 to 131 (YAHVSSS).

Belongs to the bacterial CoaD family. Homohexamer. It depends on Mg(2+) as a cofactor.

The protein localises to the cytoplasm. It carries out the reaction (R)-4'-phosphopantetheine + ATP + H(+) = 3'-dephospho-CoA + diphosphate. It participates in cofactor biosynthesis; coenzyme A biosynthesis; CoA from (R)-pantothenate: step 4/5. In terms of biological role, reversibly transfers an adenylyl group from ATP to 4'-phosphopantetheine, yielding dephospho-CoA (dPCoA) and pyrophosphate. This Enterococcus faecalis (strain ATCC 700802 / V583) protein is Phosphopantetheine adenylyltransferase.